The primary structure comprises 1298 residues: DNA-directed RNA polymerase subunit beta' (1298 aa).

Residues Cys-60, Cys-62, Cys-75, and Cys-78 each contribute to the Zn(2+) site. Residues Asp-535, Asp-537, and Asp-539 each contribute to the Mg(2+) site. 4 residues coordinate Zn(2+): Cys-877, Cys-954, Cys-961, and Cys-964.

It belongs to the RNA polymerase beta' chain family. In terms of assembly, the RNAP catalytic core consists of 2 alpha, 1 beta, 1 beta' and 1 omega subunit. When a sigma factor is associated with the core the holoenzyme is formed, which can initiate transcription. Mg(2+) is required as a cofactor. Zn(2+) serves as cofactor.

It carries out the reaction RNA(n) + a ribonucleoside 5'-triphosphate = RNA(n+1) + diphosphate. In terms of biological role, DNA-dependent RNA polymerase catalyzes the transcription of DNA into RNA using the four ribonucleoside triphosphates as substrates. The polypeptide is DNA-directed RNA polymerase subunit beta' (Micrococcus luteus (strain ATCC 4698 / DSM 20030 / JCM 1464 / CCM 169 / CCUG 5858 / IAM 1056 / NBRC 3333 / NCIMB 9278 / NCTC 2665 / VKM Ac-2230) (Micrococcus lysodeikticus)).